A 462-amino-acid polypeptide reads, in one-letter code: Argininosuccinate lyase (462 aa).

This sequence belongs to the lyase 1 family. Argininosuccinate lyase subfamily.

It localises to the cytoplasm. It catalyses the reaction 2-(N(omega)-L-arginino)succinate = fumarate + L-arginine. It participates in amino-acid biosynthesis; L-arginine biosynthesis; L-arginine from L-ornithine and carbamoyl phosphate: step 3/3. The chain is Argininosuccinate lyase from Leuconostoc citreum (strain KM20).